A 561-amino-acid polypeptide reads, in one-letter code: DNA ligase B (561 aa).

Residue K125 is the N6-AMP-lysine intermediate of the active site.

Belongs to the NAD-dependent DNA ligase family. LigB subfamily.

It catalyses the reaction NAD(+) + (deoxyribonucleotide)n-3'-hydroxyl + 5'-phospho-(deoxyribonucleotide)m = (deoxyribonucleotide)n+m + AMP + beta-nicotinamide D-nucleotide.. In terms of biological role, catalyzes the formation of phosphodiester linkages between 5'-phosphoryl and 3'-hydroxyl groups in double-stranded DNA using NAD as a coenzyme and as the energy source for the reaction. The sequence is that of DNA ligase B from Salmonella arizonae (strain ATCC BAA-731 / CDC346-86 / RSK2980).